The primary structure comprises 509 residues: Kynureninase 1 (509 aa).

Pyridoxal 5'-phosphate-binding positions include Leu169, Thr170, 197 to 200, Asp283, His286, and Tyr308; that span reads FPSD. N6-(pyridoxal phosphate)lysine is present on Lys309. Residues Trp349 and Asn377 each contribute to the pyridoxal 5'-phosphate site.

It belongs to the kynureninase family. Homodimer. Requires pyridoxal 5'-phosphate as cofactor.

It localises to the cytoplasm. It carries out the reaction L-kynurenine + H2O = anthranilate + L-alanine + H(+). The enzyme catalyses 3-hydroxy-L-kynurenine + H2O = 3-hydroxyanthranilate + L-alanine + H(+). It functions in the pathway amino-acid degradation; L-kynurenine degradation; L-alanine and anthranilate from L-kynurenine: step 1/1. Its pathway is cofactor biosynthesis; NAD(+) biosynthesis; quinolinate from L-kynurenine: step 2/3. Its function is as follows. Catalyzes the cleavage of L-kynurenine (L-Kyn) and L-3-hydroxykynurenine (L-3OHKyn) into anthranilic acid (AA) and 3-hydroxyanthranilic acid (3-OHAA), respectively. This Aspergillus fumigatus (strain CBS 144.89 / FGSC A1163 / CEA10) (Neosartorya fumigata) protein is Kynureninase 1 (bna5-1).